We begin with the raw amino-acid sequence, 198 residues long: METLLAFKVKGGVLCLADSSVNHSIVKMKDDEDKILEIDGHKLLLSAGEAGDRVQFTEYISKNIKLYSLRNSYPMSTPAAANFIRNELATSIRSHPYSINLILAGYDKEVEDGGTSLYYMDYLGSLQKLNFGCHGYASYFLLGLLDRHHKCDLSLEDGINLMHLCTTELKTRFLVSGKYTLKFVSSEGIKVLPFNAPQ.

Belongs to the peptidase T1B family. The 26S proteasome consists of a 20S proteasome core and two 19S regulatory subunits. The 20S proteasome core is composed of 28 subunits that are arranged in four stacked rings, resulting in a barrel-shaped structure. The two end rings are each formed by seven alpha subunits, and the two central rings are each formed by seven beta subunits. The catalytic chamber with the active sites is on the inside of the barrel.

The protein resides in the cytoplasm. Its subcellular location is the nucleus. Its function is as follows. Non-catalytic component of the proteasome, a multicatalytic proteinase complex which is characterized by its ability to cleave peptides with Arg, Phe, Tyr, Leu, and Glu adjacent to the leaving group at neutral or slightly basic pH. The proteasome has an ATP-dependent proteolytic activity. The sequence is that of Proteasome subunit beta type-2 (psmB2) from Dictyostelium discoideum (Social amoeba).